Reading from the N-terminus, the 264-residue chain is Phosphonoacetaldehyde hydrolase (264 aa).

The Nucleophile role is filled by aspartate 9. 2 residues coordinate Mg(2+): aspartate 9 and alanine 11. The active-site Schiff-base intermediate with substrate is lysine 50. Mg(2+) is bound at residue aspartate 183.

Belongs to the HAD-like hydrolase superfamily. PhnX family. Homodimer. The cofactor is Mg(2+).

It catalyses the reaction phosphonoacetaldehyde + H2O = acetaldehyde + phosphate + H(+). Its function is as follows. Involved in phosphonate degradation. The sequence is that of Phosphonoacetaldehyde hydrolase from Bacillus cereus (strain ATCC 10987 / NRS 248).